A 375-amino-acid polypeptide reads, in one-letter code: Delta(12) fatty acid dehydrogenase (375 aa).

The next 2 helical transmembrane spans lie at 54-74 (IIAY…PAPL) and 77-97 (LAWP…WVIG). The Histidine box-1 motif lies at 98 to 102 (HECGH). The helical transmembrane segment at 110-130 (WVDDTVGFILHSFLMTPYFSW) threads the bilayer. The Histidine box-2 signature appears at 134–138 (HRNHH). 3 consecutive transmembrane segments (helical) span residues 172–192 (LLIM…TNIS), 218–238 (VLLS…AVAA), and 242–262 (AWVT…FDII). A Histidine box-3 motif is present at residues 308 to 312 (HVMHH).

It belongs to the fatty acid desaturase type 1 family. Fe cation serves as cofactor. In terms of tissue distribution, seed.

It localises to the membrane. It carries out the reaction a (9Z,12Z)-octadecadienoyl-containing glycerolipid + 2 Fe(II)-[cytochrome b5] + O2 + 2 H(+) = a (9Z)-octadec-9-en-12-ynoyl-containing glycerolipid + 2 Fe(III)-[cytochrome b5] + 2 H2O. The protein operates within lipid metabolism; polyunsaturated fatty acid biosynthesis. Its function is as follows. Changes the delta-12 double bond of linoleic acid into a triple bond in the biosynthesis of crepenynic acid. This Crepis alpina (Hawksbeard) protein is Delta(12) fatty acid dehydrogenase.